A 327-amino-acid polypeptide reads, in one-letter code: Zinc finger C2HC domain-containing protein 1A (327 aa).

The C2HC/C3H-type 1 zinc finger occupies 13–42; sequence ELVPCKICGRSFFPKVLKKHVPICQKTAAK. Zn(2+) is bound by residues cysteine 17, cysteine 20, histidine 32, and cysteine 36. 2 disordered regions span residues 40 to 96 and 108 to 131; these read AAKR…KHEE and NQVI…DYIQ. Residues 46–56 are compositionally biased toward basic and acidic residues; it reads VFDSGRQRAEG. The span at 63–76 shows a compositional bias: low complexity; that stretch reads KPIKPKLQSSSSSS. Over residues 116–125 the composition is skewed to pro residues; sequence PLPPPPPPSY. The C2HC/C3H-type 2 zinc-finger motif lies at 128 to 157; sequence DYIQCPYCQRRFGENAADRHIKFCKEQASR. Cysteine 132, cysteine 135, histidine 147, and cysteine 151 together coordinate Zn(2+). A disordered region spans residues 154–271; the sequence is QASRISNKSK…NPSTGIGMNK (118 aa). A compositionally biased stretch (polar residues) spans 187-199; the sequence is NSPTASSVSSRLP. A compositionally biased stretch (low complexity) spans 211–229; that stretch reads GIPSSKPSSTGSIKSTPSG. Composition is skewed to polar residues over residues 233-245 and 255-267; these read LRNN…SPPS and VSQS…STGI.

The protein belongs to the ZC2HC1 family. The cofactor is Zn(2+).

This is Zinc finger C2HC domain-containing protein 1A (zc2hc1a) from Danio rerio (Zebrafish).